Consider the following 255-residue polypeptide: Endonuclease V (255 aa).

Residues D42 and D110 each coordinate Mg(2+).

Belongs to the endonuclease V family. It depends on Mg(2+) as a cofactor.

Its subcellular location is the cytoplasm. It catalyses the reaction Endonucleolytic cleavage at apurinic or apyrimidinic sites to products with a 5'-phosphate.. Its function is as follows. DNA repair enzyme involved in the repair of deaminated bases. Selectively cleaves double-stranded DNA at the second phosphodiester bond 3' to a deoxyinosine leaving behind the intact lesion on the nicked DNA. This is Endonuclease V from Aeropyrum pernix (strain ATCC 700893 / DSM 11879 / JCM 9820 / NBRC 100138 / K1).